Here is a 126-residue protein sequence, read N- to C-terminus: uncharacterized protein (126 aa).

This is an uncharacterized protein from His1 virus (isolate Australia/Victoria) (His1V).